Consider the following 342-residue polypeptide: Heat-inducible transcription repressor HrcA (342 aa).

The protein belongs to the HrcA family.

Functionally, negative regulator of class I heat shock genes (grpE-dnaK-dnaJ and groELS operons). Prevents heat-shock induction of these operons. In Acholeplasma laidlawii, this protein is Heat-inducible transcription repressor HrcA.